A 120-amino-acid chain; its full sequence is MTAFRMVWSMLLASLLMLLVASSTAPADALSPPAAGLGADHSFTKRSLFDPSCTGVFDRQLLRRLSRVCDDCFNVFREPNVATECRSNCYNNEVFRQCMEYLLPAHLHEEHRLAVQMVGK.

The first 27 residues, 1 to 27 (MTAFRMVWSMLLASLLMLLVASSTAPA), serve as a signal peptide directing secretion. Intrachain disulfides connect cysteine 53/cysteine 89, cysteine 69/cysteine 85, and cysteine 72/cysteine 98. Position 118 is a valine amide (valine 118).

This sequence belongs to the arthropod CHH/MIH/GIH/VIH hormone family.

Its subcellular location is the secreted. Hormone found in the sinus gland of isopods and decapods which controls the blood sugar level. Has a secretagogue action over the amylase released from the midgut gland. May act as a stress hormone and may be involved in the control of molting and reproduction. This Penaeus monodon (Giant tiger prawn) protein is Crustacean hyperglycemic hormones 1 (CHH1).